The sequence spans 544 residues: Light-independent protochlorophyllide reductase subunit B (544 aa).

Position 36 (D36) interacts with [4Fe-4S] cluster. D286 functions as the Proton donor in the catalytic mechanism. 421-422 is a binding site for substrate; the sequence is GM.

The protein belongs to the ChlB/BchB/BchZ family. As to quaternary structure, protochlorophyllide reductase is composed of three subunits; BchL, BchN and BchB. Forms a heterotetramer of two BchB and two BchN subunits. [4Fe-4S] cluster is required as a cofactor.

The catalysed reaction is chlorophyllide a + oxidized 2[4Fe-4S]-[ferredoxin] + 2 ADP + 2 phosphate = protochlorophyllide a + reduced 2[4Fe-4S]-[ferredoxin] + 2 ATP + 2 H2O. It functions in the pathway porphyrin-containing compound metabolism; bacteriochlorophyll biosynthesis (light-independent). Its function is as follows. Component of the dark-operative protochlorophyllide reductase (DPOR) that uses Mg-ATP and reduced ferredoxin to reduce ring D of protochlorophyllide (Pchlide) to form chlorophyllide a (Chlide). This reaction is light-independent. The NB-protein (BchN-BchB) is the catalytic component of the complex. This chain is Light-independent protochlorophyllide reductase subunit B, found in Chloroflexus aggregans (strain MD-66 / DSM 9485).